A 226-amino-acid chain; its full sequence is Peroxiredoxin-like 2C (226 aa).

This sequence belongs to the peroxiredoxin-like PRXL2 family. PRXL2C subfamily.

This is Peroxiredoxin-like 2C (prxl2c) from Takifugu rubripes (Japanese pufferfish).